The primary structure comprises 275 residues: MAEPASVAAESLAGSRARAARTVLGQVVLPGEELLLPEQEDAEGPGGAVERPLSLNARACSRVRVVCGPGLRRCGDRLLVTKCGRLRHKEPGSGSGGGVYWVDSQQKRYVPVKGDHVIGIVTAKSGDIFKVDVGGSEPASLSYLSFEGATKRNRPNVQVGDLIYGQFVVANKDMEPEMVCIDSCGRANGMGVIGQDGLLFKVTLGLIRKLLAPDCEIIQEVGKLYPLEIVFGMNGRIWVKAKTIQQTLILANILEACEHMTSDQRKQIFSRLAES.

A2 is subject to N-acetylalanine. A Glycyl lysine isopeptide (Lys-Gly) (interchain with G-Cter in SUMO2) cross-link involves residue K151.

The protein belongs to the RRP40 family. As to quaternary structure, component of the RNA exosome core complex (Exo-9), composed of EXOSC1, EXOSC2, EXOSC3, EXOSC4, EXOSC5, EXOSC6, EXOSC7, EXOSC8 and EXOSC9; within the complex interacts with EXOSC5 and EXOSC9. The catalytically inactive RNA exosome core complex (Exo-9) associates with the catalytic subunit EXOSC10/RRP6. Exo-9 may associate with DIS3 to form the nucleolar exosome complex, or DIS3L to form the cytoplasmic exosome complex. Exo-9 is formed by a hexameric base ring consisting of the heterodimers EXOSC4-EXOSC9, EXOSC5-EXOSC8 and EXOSC6-EXOSC7, and a cap ring consisting of EXOSC1, EXOSC2 and EXOSC3. The RNA exosome complex associates with cofactors C1D/RRP47, MPHOSPH6/MPP6 and MTREX/MTR4. Interacts with MPHOSPH6/MPP6; the interaction is direct. Interacts with GTPBP1. Interacts with ZC3HAV1. Interacts with DDX17 only in the presence of ZC3HAV1 in an RNA-independent manner. Interacts with DHX36; this interaction occurs in a RNase-insensitive manner. Interacts with HBS1L isoform 2.

The protein resides in the cytoplasm. Its subcellular location is the nucleus. It is found in the nucleolus. Functionally, non-catalytic component of the RNA exosome complex which has 3'-&gt;5' exoribonuclease activity and participates in a multitude of cellular RNA processing and degradation events. In the nucleus, the RNA exosome complex is involved in proper maturation of stable RNA species such as rRNA, snRNA and snoRNA, in the elimination of RNA processing by-products and non-coding 'pervasive' transcripts, such as antisense RNA species and promoter-upstream transcripts (PROMPTs), and of mRNAs with processing defects, thereby limiting or excluding their export to the cytoplasm. The RNA exosome may be involved in Ig class switch recombination (CSR) and/or Ig variable region somatic hypermutation (SHM) by targeting AICDA deamination activity to transcribed dsDNA substrates. In the cytoplasm, the RNA exosome complex is involved in general mRNA turnover and specifically degrades inherently unstable mRNAs containing AU-rich elements (AREs) within their 3' untranslated regions, and in RNA surveillance pathways, preventing translation of aberrant mRNAs. It seems to be involved in degradation of histone mRNA. The catalytic inactive RNA exosome core complex of 9 subunits (Exo-9) is proposed to play a pivotal role in the binding and presentation of RNA for ribonucleolysis, and to serve as a scaffold for the association with catalytic subunits and accessory proteins or complexes. EXOSC3 as peripheral part of the Exo-9 complex stabilizes the hexameric ring of RNase PH-domain subunits through contacts with EXOSC9 and EXOSC5. This is Exosome complex component RRP40 (EXOSC3) from Homo sapiens (Human).